The following is a 446-amino-acid chain: Nuclear distribution protein nudF (446 aa).

One can recognise a LisH domain in the interval 9 to 41 (QAEELHKSMVAYLSSIKASQSSNTLREELGIGD). A coiled-coil region spans residues 60-86 (TGIARLQRKILDLESKITSLQAELDSV). WD repeat units follow at residues 113–154 (SHRD…RTLK), 156–196 (HMRG…ANIR), 200–240 (GHDH…CVRT), 243–282 (SNSI…PRAA), 285–345 (GHDN…IKTL), 347–386 (GHDN…RLVK), 391–430 (AHGH…PAFQ), and 432–446 (VIAT…RVFK).

It belongs to the WD repeat LIS1/nudF family. In terms of assembly, self-associates. Interacts with nudE and dynein.

The protein resides in the cytoplasm. The protein localises to the cytoskeleton. It localises to the spindle pole. Functionally, positively regulates the activity of the minus-end directed microtubule motor protein dynein. May enhance dynein-mediated microtubule sliding by targeting dynein to the microtubule plus end. Required for nuclear migration during vegetative growth as well as development. Required for retrograde early endosome (EE) transport from the hyphal tip. Required for localization of dynein to the mitotic spindle poles. Recruits additional proteins to the dynein complex at SPBs. The protein is Nuclear distribution protein nudF of Aspergillus terreus (strain NIH 2624 / FGSC A1156).